Here is a 267-residue protein sequence, read N- to C-terminus: Cilia- and flagella-associated protein 300 (267 aa).

The protein belongs to the CFAP300 family. In terms of assembly, interacts with DNAAF2.

Its subcellular location is the cytoplasm. The protein localises to the cytoskeleton. It localises to the cilium axoneme. Functionally, cilium- and flagellum-specific protein that plays a role in axonemal structure organization and motility. May play a role in outer and inner dynein arm assembly. The polypeptide is Cilia- and flagella-associated protein 300 (Rattus norvegicus (Rat)).